The sequence spans 78 residues: Small ribosomal subunit protein bS18 (78 aa).

This sequence belongs to the bacterial ribosomal protein bS18 family. As to quaternary structure, part of the 30S ribosomal subunit. Forms a tight heterodimer with protein bS6.

Binds as a heterodimer with protein bS6 to the central domain of the 16S rRNA, where it helps stabilize the platform of the 30S subunit. In Kineococcus radiotolerans (strain ATCC BAA-149 / DSM 14245 / SRS30216), this protein is Small ribosomal subunit protein bS18.